The sequence spans 570 residues: Frizzled-2 (570 aa).

The N-terminal stretch at 1-28 (MRARSALPRSALPRLLLPLLLLPAAGPA) is a signal peptide. Over 29-252 (QFHGEKGISI…HHHTRFARLW (224 aa)) the chain is Extracellular. Residues 39-158 (PDHGFCQPIS…HGAEQICVGQ (120 aa)) enclose the FZ domain. Cystine bridges form between cysteine 44–cysteine 105, cysteine 52–cysteine 98, cysteine 89–cysteine 126, cysteine 115–cysteine 155, and cysteine 119–cysteine 143. Asparagine 58 carries an N-linked (GlcNAc...) asparagine glycan. The N-linked (GlcNAc...) asparagine glycan is linked to asparagine 159. Residues 166–194 (PALLTTAPPSGLQPGAGGTPGGPGGGGAP) are disordered. Residues 179-193 (PGAGGTPGGPGGGGA) show a composition bias toward gly residues. A helical transmembrane segment spans residues 253 to 273 (ILTWSVLCCASTFFTVTTSLV). Over 274–284 (AMQRFRYPERP) the chain is Cytoplasmic. A helical transmembrane segment spans residues 285-305 (IIFLSGCYTMVSVAYIAGFVL). The Extracellular portion of the chain corresponds to 306 to 332 (QERVVCNERFSEDGYRTVGQGTKKEGC). The helical transmembrane segment at 333–353 (TILFMMLYFFSMASSIWWVIL) threads the bilayer. Residues 354-375 (SLTWFLAAGMKWGHAAIEANSQ) lie on the Cytoplasmic side of the membrane. A helical transmembrane segment spans residues 376–396 (YFHLAAWAVPAVKTITILAMG). Residues 397-419 (QIDGDLLSGVCFVGLNRLDPLRG) are Extracellular-facing. The helical transmembrane segment at 420–440 (FVLAPLFVYLFIGTSFLLAGF) threads the bilayer. Over 441 to 466 (VSLFRIRTIMKHDGTKTEPLERLMVR) the chain is Cytoplasmic. The helical transmembrane segment at 467 to 487 (IGVFSVLYTVPATIVIACYFY) threads the bilayer. Residues 488–524 (EQAFREHWERSWVSQHCKSLAIPCPAHYTPRTSPDFT) lie on the Extracellular side of the membrane. Residues 525-545 (VYMIKYLMTLIVGITSGFWIW) traverse the membrane as a helical segment. The Cytoplasmic portion of the chain corresponds to 546-570 (SGKTLHSWRKFYTRLTNSRHGETTV). The short motif at 548–553 (KTLHSW) is the Lys-Thr-X-X-X-Trp motif, mediates interaction with the PDZ domain of Dvl family members element. A PDZ-binding motif is present at residues 568–570 (TTV).

This sequence belongs to the G-protein coupled receptor Fz/Smo family. Post-translationally, ubiquitinated by ZNRF3, leading to its degradation by the proteasome. Widely expressed. Most abundant in kidney, liver, uterus, ovary and heart. Lower levels seen in brain and intestine. Extremely low in calvaria, mammary glands and testis.

The protein localises to the membrane. It localises to the cell membrane. In terms of biological role, receptor for Wnt proteins. Most of frizzled receptors are coupled to the beta-catenin canonical signaling pathway, which leads to the activation of disheveled proteins, inhibition of GSK-3 kinase, nuclear accumulation of beta-catenin and activation of Wnt target genes. A second signaling pathway involving PKC and calcium fluxes has been seen for some family members, but it is not yet clear if it represents a distinct pathway or if it can be integrated in the canonical pathway, as PKC seems to be required for Wnt-mediated inactivation of GSK-3 kinase. Both pathways seem to involve interactions with G-proteins. May be involved in transduction and intercellular transmission of polarity information during tissue morphogenesis and/or in differentiated tissues. Activation by Wnt5A stimulates PKC activity via a G-protein-dependent mechanism. This chain is Frizzled-2 (Fzd2), found in Rattus norvegicus (Rat).